The chain runs to 87 residues: Small ribosomal subunit protein bS20 (87 aa).

It belongs to the bacterial ribosomal protein bS20 family.

Functionally, binds directly to 16S ribosomal RNA. The chain is Small ribosomal subunit protein bS20 from Brachyspira hyodysenteriae (strain ATCC 49526 / WA1).